A 155-amino-acid polypeptide reads, in one-letter code: Small ribosomal subunit protein uS7 (155 aa).

This sequence belongs to the universal ribosomal protein uS7 family. In terms of assembly, part of the 30S ribosomal subunit. Contacts proteins S9 and S11.

In terms of biological role, one of the primary rRNA binding proteins, it binds directly to 16S rRNA where it nucleates assembly of the head domain of the 30S subunit. Is located at the subunit interface close to the decoding center, probably blocks exit of the E-site tRNA. The protein is Small ribosomal subunit protein uS7 of Petrotoga mobilis (strain DSM 10674 / SJ95).